The following is a 123-amino-acid chain: UPF0482 protein YE2026 (123 aa).

The signal sequence occupies residues 1-31; the sequence is MKITSLPRLMRVFLPVAVLALPLAWQTAALA. Residues 47–66 form a disordered region; the sequence is GNNDPMSKEQARQSQQQWDD.

It belongs to the UPF0482 family.

The chain is UPF0482 protein YE2026 from Yersinia enterocolitica serotype O:8 / biotype 1B (strain NCTC 13174 / 8081).